The primary structure comprises 258 residues: Synaptosomal-associated protein 29 (258 aa).

The interval 1–41 is disordered; it reads MSAYPKSYNPFDDDGEDEGARPAPWRDARDLPDGPDAPADR. The segment covering 18–32 has biased composition (basic and acidic residues); the sequence is EGARPAPWRDARDLP. Residues 76 to 107 are a coiled coil; that stretch reads ASSEELARQRGVLERTEKMVDKMDQDLKISQK. A phosphoserine mark is found at S77, S78, and S114. 2 positions are modified to phosphothreonine: T130 and T137. The segment at 150-191 is disordered; it reads ISTSKEQEAKYQASHPNLRKLDDTDPVPRGAGSAMSTDAYPK. Phosphoserine occurs at positions 163, 182, 185, 204, and 210. In terms of domain architecture, t-SNARE coiled-coil homology spans 196-258; that stretch reads RAYHQKIDSN…KSTERKVRQL (63 aa).

Belongs to the SNAP-25 family. In terms of assembly, forms a SNARE complex, composed of VAMP8, SNAP29 and STX17, involved in fusion of autophagosome with lysosome. Interacts with multiple syntaxins including STX6. Interacts with EIPR1. Interacts with STX17; this interaction is increased in the absence of TMEM39A. As to quaternary structure, (Microbial infection) Interacts with Hantaan hantavirus nucleoprotein; this interaction prevents the breakdown of the viral glycoprotein N by virus-triggered autophagy. (Microbial infection) The interaction with STX17 is decreased in presence of SARS coronavirus-2/SARS-CoV-2 ORF3A protein. In terms of tissue distribution, found in brain, heart, kidney, liver, lung, placenta, skeletal muscle, spleen and pancreas.

It localises to the cytoplasm. The protein localises to the golgi apparatus membrane. The protein resides in the cytoplasmic vesicle. Its subcellular location is the autophagosome membrane. It is found in the cell projection. It localises to the cilium membrane. Functionally, SNAREs, soluble N-ethylmaleimide-sensitive factor-attachment protein receptors, are essential proteins for fusion of cellular membranes. SNAREs localized on opposing membranes assemble to form a trans-SNARE complex, an extended, parallel four alpha-helical bundle that drives membrane fusion. SNAP29 is a SNARE involved in autophagy through the direct control of autophagosome membrane fusion with the lysososome membrane. Also plays a role in ciliogenesis by regulating membrane fusions. This Homo sapiens (Human) protein is Synaptosomal-associated protein 29.